A 1088-amino-acid polypeptide reads, in one-letter code: RNA-directed RNA polymerase (1088 aa).

A RdRp catalytic domain is found at 501 to 687 (LSYGDVTRFL…AKRYLAGGKI (187 aa)).

The protein belongs to the reoviridae RNA-directed RNA polymerase family. Interacts with VP3 (Potential). Interacts with VP2; this interaction activates VP1. Interacts with NSP5; this interaction is probably necessary for the formation of functional virus factories. Interacts with NSP2; this interaction is weak. Mg(2+) serves as cofactor.

It localises to the virion. It catalyses the reaction RNA(n) + a ribonucleoside 5'-triphosphate = RNA(n+1) + diphosphate. Its function is as follows. RNA-directed RNA polymerase that is involved in both transcription and genome replication. Together with VP3 capping enzyme, forms an enzyme complex positioned near the channels situated at each of the five-fold vertices of the core. Following infection, the outermost layer of the virus is lost, leaving a double-layered particle (DLP) made up of the core and VP6 shell. VP1 then catalyzes the transcription of fully conservative plus-strand genomic RNAs that are extruded through the DLP's channels into the cytoplasm where they function as mRNAs for translation of viral proteins. One copy of each of the viral (+)RNAs is also recruited during core assembly, together with newly synthesized polymerase complexes and VP2. The polymerase of these novo-formed particles catalyzes the synthesis of complementary minus-strands leading to dsRNA formation. To do so, the polymerase specifically recognizes and binds 4 bases 5'-UGUG-3' in the conserved 3'-sequence of plus-strand RNA templates. VP2 presumably activates the autoinhibited VP1-RNA complex to coordinate packaging and genome replication. Once dsRNA synthesis is complete, the polymerase switches to the transcriptional mode, thus providing secondary transcription. The chain is RNA-directed RNA polymerase from Rotavirus A (strain RVA/Human/Japan/KU/1995/G1P1A[8]) (RV-A).